Here is a 260-residue protein sequence, read N- to C-terminus: Trans-aconitate 2-methyltransferase (260 aa).

The protein belongs to the methyltransferase superfamily. Tam family.

Its subcellular location is the cytoplasm. It carries out the reaction trans-aconitate + S-adenosyl-L-methionine = (E)-3-(methoxycarbonyl)pent-2-enedioate + S-adenosyl-L-homocysteine. Functionally, catalyzes the S-adenosylmethionine monomethyl esterification of trans-aconitate. In Paracidovorax citrulli (strain AAC00-1) (Acidovorax citrulli), this protein is Trans-aconitate 2-methyltransferase.